The sequence spans 198 residues: Recombination protein RecR (198 aa).

The C4-type zinc-finger motif lies at 57–72 (CSVCGHITDKDPCYIC). Positions 80 to 175 (SVLCVVQESK…KVTRIAHGLP (96 aa)) constitute a Toprim domain.

It belongs to the RecR family.

Its function is as follows. May play a role in DNA repair. It seems to be involved in an RecBC-independent recombinational process of DNA repair. It may act with RecF and RecO. In Listeria innocua serovar 6a (strain ATCC BAA-680 / CLIP 11262), this protein is Recombination protein RecR.